Reading from the N-terminus, the 446-residue chain is Keratin, type I cytoskeletal 25 (446 aa).

A disordered region spans residues 1–20 (MSLRLSSGSKRSYARPSTGS). The segment at 1–74 (MSLRLSSGSK…VNEGGLLSGN (74 aa)) is head. The interval 75–110 (EKVTMQNLNDRLASYLDNVQALQEANADLEQKIKGW) is coil 1A. In terms of domain architecture, IF rod spans 75–390 (EKVTMQNLND…LLIGGDEGAC (316 aa)). The interval 111 to 132 (YEKFGPGSCRGLDHDYSRYFPI) is linker 1. The interval 133 to 224 (IDDLKNQIIT…KNHKEEMQAL (92 aa)) is coil 1B. Residues 225 to 247 (QCAAGGNVNVEMNAAPGVDLTVL) form a linker 12 region. Residues 248 to 386 (LNNMRAEYEA…ETYCLLIGGD (139 aa)) are coil 2. Residues 387–446 (EGACKSSSYKSKDYTSGNAGNQSKDSPKAIVVKKVLEEVDQRSKILTTRLHSLEEKSQSN) form a tail region. Residues 394–413 (SYKSKDYTSGNAGNQSKDSP) form a disordered region. Residues 400–410 (YTSGNAGNQSK) are compositionally biased toward polar residues. Ser-438 is modified (phosphoserine).

Belongs to the intermediate filament family. As to quaternary structure, heterodimer of a type I and a type II keratin. Heterodimer with type II keratin KRT5 leading to the formation of keratin intermediate filament (KIF) network. Interacts with KRT6A to form filaments.

The protein localises to the cytoplasm. Essential for the proper assembly of type I and type II keratin protein complexes and formation of keratin intermediate filaments in the inner root sheath (irs). Plays a role in the cytoskeleton organization. This chain is Keratin, type I cytoskeletal 25, found in Rattus norvegicus (Rat).